The sequence spans 258 residues: Protein UL24 homolog (258 aa).

The protein belongs to the herpesviridae UL24 family.

It is found in the virion. The protein localises to the host cytoplasm. Its subcellular location is the host nucleus. The protein resides in the host nucleolus. It localises to the host Golgi apparatus. Functionally, may participate in nuclear egress of viral particles. Plays a role in the dispersal of several host nucleolar proteins including NCL/nucleolin and NPM1. Since deletion of host NCL/nucleolin negatively impact on nuclear egress, UL24 supposedly acts on this process through its effect on host nucleoli. The protein is Protein UL24 homolog of Varicella-zoster virus (strain Dumas) (HHV-3).